The sequence spans 149 residues: Cytochrome c' (149 aa).

A signal peptide spans 1–19 (MRRVLLATLMAALPAAAMA). Heme c-binding residues include R29, T89, A90, C138, C141, and H142.

In terms of assembly, monomer and homodimer. Binds 1 heme c group covalently per subunit.

In terms of biological role, cytochrome c' is the most widely occurring bacterial c-type cytochrome. Cytochromes c' are high-spin proteins and the heme has no sixth ligand. Their exact function is not known. This is Cytochrome c' (cycP) from Cereibacter sphaeroides (strain ATCC 17023 / DSM 158 / JCM 6121 / CCUG 31486 / LMG 2827 / NBRC 12203 / NCIMB 8253 / ATH 2.4.1.) (Rhodobacter sphaeroides).